Reading from the N-terminus, the 659-residue chain is Chaperone protein DnaK (659 aa).

A Phosphothreonine; by autocatalysis modification is found at Thr-201. Positions 571-592 are enriched in basic and acidic residues; it reads RSALKEDAPTEKIKEASDELSR. Residues 571–659 form a disordered region; that stretch reads RSALKEDAPT…DVEIVDKPND (89 aa). A compositionally biased stretch (low complexity) spans 600-613; the sequence is AMQSQSASAAANAQ.

It belongs to the heat shock protein 70 family.

Functionally, acts as a chaperone. The protein is Chaperone protein DnaK of Chlamydia abortus (strain DSM 27085 / S26/3) (Chlamydophila abortus).